Consider the following 61-residue polypeptide: Small ribosomal subunit protein uS14 (61 aa).

Cys-24, Cys-27, Cys-40, and Cys-43 together coordinate Zn(2+).

Belongs to the universal ribosomal protein uS14 family. Zinc-binding uS14 subfamily. Part of the 30S ribosomal subunit. Contacts proteins S3 and S10. Requires Zn(2+) as cofactor.

Functionally, binds 16S rRNA, required for the assembly of 30S particles and may also be responsible for determining the conformation of the 16S rRNA at the A site. This is Small ribosomal subunit protein uS14 from Campylobacter fetus subsp. fetus (strain 82-40).